The primary structure comprises 304 residues: Protoheme IX farnesyltransferase (304 aa).

Transmembrane regions (helical) follow at residues 31-51, 58-78, 99-119, 126-146, 154-174, 180-200, 222-242, 243-263, and 284-304; these read VNTLIVFCAVIGMFLAVPDGL, VAATLGIAFVAGAAAAMNCLI, LAPAETLLFAGVLGGTGLTVL, LTMWLTLATFVGYAVVYTVLL, IVIGGASGAMPPVLGWAAVTG, ALLLFLIIFAWTPPHFWALAL, FTRLSVLLYTCILFGVTLLPF, ATRMSGPLYLVCAVALGIGFL, and FSILYLFLLFAALLMDHYLPL.

The protein belongs to the UbiA prenyltransferase family. Protoheme IX farnesyltransferase subfamily.

It is found in the cell inner membrane. The enzyme catalyses heme b + (2E,6E)-farnesyl diphosphate + H2O = Fe(II)-heme o + diphosphate. Its pathway is porphyrin-containing compound metabolism; heme O biosynthesis; heme O from protoheme: step 1/1. Functionally, converts heme B (protoheme IX) to heme O by substitution of the vinyl group on carbon 2 of heme B porphyrin ring with a hydroxyethyl farnesyl side group. The polypeptide is Protoheme IX farnesyltransferase (Aromatoleum aromaticum (strain DSM 19018 / LMG 30748 / EbN1) (Azoarcus sp. (strain EbN1))).